Consider the following 424-residue polypeptide: Glutamyl-tRNA reductase (424 aa).

Substrate contacts are provided by residues 51-54, Ser-99, 104-106, and Gln-110; these read TCNR and EDQ. Cys-52 (nucleophile) is an active-site residue. Residue 179-184 coordinates NADP(+); it reads GGGEMG.

This sequence belongs to the glutamyl-tRNA reductase family. As to quaternary structure, homodimer.

The catalysed reaction is (S)-4-amino-5-oxopentanoate + tRNA(Glu) + NADP(+) = L-glutamyl-tRNA(Glu) + NADPH + H(+). The protein operates within porphyrin-containing compound metabolism; protoporphyrin-IX biosynthesis; 5-aminolevulinate from L-glutamyl-tRNA(Glu): step 1/2. In terms of biological role, catalyzes the NADPH-dependent reduction of glutamyl-tRNA(Glu) to glutamate 1-semialdehyde (GSA). This Methanocorpusculum labreanum (strain ATCC 43576 / DSM 4855 / Z) protein is Glutamyl-tRNA reductase.